Consider the following 170-residue polypeptide: MAKHQINYAANGGLPVVLTTVDKLVQWGRSNSLWALSYGLACCAIEMMASGASRYDFDRFGTIFRASPRHSEVMIIAGTLTKKHAEFTRRLYDQMPEPKWVISMGSCANTGGMFNTYSTVQGVDRIIPVDIYIPGCAPRPETLQYALMMLQKKIRKQSAFRAQKPRKLEI.

[4Fe-4S] cluster is bound by residues cysteine 42, cysteine 43, cysteine 107, and cysteine 136.

Belongs to the complex I 20 kDa subunit family. In terms of assembly, NDH-1 is composed of 14 different subunits. Subunits NuoB, C, D, E, F, and G constitute the peripheral sector of the complex. It depends on [4Fe-4S] cluster as a cofactor.

The protein resides in the cell inner membrane. The enzyme catalyses a quinone + NADH + 5 H(+)(in) = a quinol + NAD(+) + 4 H(+)(out). NDH-1 shuttles electrons from NADH, via FMN and iron-sulfur (Fe-S) centers, to quinones in the respiratory chain. The immediate electron acceptor for the enzyme in this species is believed to be ubiquinone. Couples the redox reaction to proton translocation (for every two electrons transferred, four hydrogen ions are translocated across the cytoplasmic membrane), and thus conserves the redox energy in a proton gradient. This is NADH-quinone oxidoreductase subunit B from Campylobacter concisus (strain 13826).